A 361-amino-acid polypeptide reads, in one-letter code: Peptide chain release factor 1 (361 aa).

Residue Gln237 is modified to N5-methylglutamine. Positions 287-297 (KQQKEQSDTRK) are enriched in basic and acidic residues. The disordered stretch occupies residues 287–313 (KQQKEQSDTRKSLVGSGDRSERIRTYN).

Belongs to the prokaryotic/mitochondrial release factor family. In terms of processing, methylated by PrmC. Methylation increases the termination efficiency of RF1.

It is found in the cytoplasm. Peptide chain release factor 1 directs the termination of translation in response to the peptide chain termination codons UAG and UAA. In Francisella tularensis subsp. tularensis (strain FSC 198), this protein is Peptide chain release factor 1.